A 187-amino-acid polypeptide reads, in one-letter code: Oligoribonuclease (187 aa).

Residues 7 to 170 (LCWLDMEMTG…DDILESIEEM (164 aa)) form the Exonuclease domain. Tyrosine 128 is a catalytic residue.

It belongs to the oligoribonuclease family.

Its subcellular location is the cytoplasm. In terms of biological role, 3'-to-5' exoribonuclease specific for small oligoribonucleotides. This is Oligoribonuclease from Neisseria meningitidis serogroup A / serotype 4A (strain DSM 15465 / Z2491).